A 374-amino-acid polypeptide reads, in one-letter code: MEFCLAQPCPQGNHEATSSTFNTFQPMNLTQGRCQNLSCGSRPSMQVMKEQGVQLSPRTNHTVVSASAPGTAWVLGNADRAEEVPGKGDLSLQAETRAWVQKTQAHWLLLKTAPLWFHGFITRREAERLLQPQPLGCYLVRFSESAVTFVLSYRSQTCCRHFLLAQLGDGRHVVLGEDSAHAQLQDLLEHYTECPLSPYGEILTQPLARQTAEPAGLSLRADSDSGSKRQDPDTQLSLLLQQGQAQASGHTEKVWASQQKATSQASRPRPPIPAKPQLPPEVYTSPASRLHQAPPINPIYQEPDEPIAFYAMGRGSPGDAPSNIYAEVEGPSGTAPIGHPILRKCWSRPISRGQVREVQGKISSRSRAERGSPS.

Residues 116–207 (WFHGFITRRE…PYGEILTQPL (92 aa)) form the SH2 domain. The disordered stretch occupies residues 213–232 (EPAGLSLRADSDSGSKRQDP). A compositionally biased stretch (basic and acidic residues) spans 221–232 (ADSDSGSKRQDP). Ser237 carries the phosphoserine modification. A disordered region spans residues 241–301 (QQGQAQASGH…QAPPINPIYQ (61 aa)). The span at 256–266 (ASQQKATSQAS) shows a compositional bias: polar residues. The short motif at 267–273 (RPRPPIP) is the SH3-binding element. Residues 268–279 (PRPPIPAKPQLP) show a composition bias toward pro residues. At Ser316 the chain carries Phosphoserine. Disordered regions lie at residues 321-340 (PSNIYAEVEGPSGTAPIGHP) and 353-374 (GQVREVQGKISSRSRAERGSPS).

In terms of assembly, interacts with KDR. Interacts with p56-LCK, TXK and ITK. Post-translationally, phosphorylated on tyrosine residues upon TCR-stimulation. As to expression, expression limited to tissues of the immune system and, in particular, activated T-cells and natural killer cells. Expressed in the thymus, lymph node, and to a lesser extent, in the spleen and bone marrow. According to PubMed:10553045, also expressed in the lung.

The protein resides in the cytoplasm. It localises to the cell membrane. In terms of biological role, could be a T-cell-specific adapter protein involved in the control of T-cell activation. May play a role in p56-LCK-mediated T-cell signaling. Could be involved in the regulation of responses to T-cell activation stimuli, specifically proliferation and lymphokine production. Interactions with ITK and TXK may provide important biochemical links of these two important kinases with other components in the T-cell activation machinery. This Mus musculus (Mouse) protein is SH2 domain-containing protein 2A (Sh2d2a).